Consider the following 233-residue polypeptide: 5'-methylthioadenosine/S-adenosylhomocysteine nucleosidase (233 aa).

Glu12 functions as the Proton acceptor in the catalytic mechanism. Substrate contacts are provided by residues Gly78, Ile156, and Met177–Glu178. Asp201 functions as the Proton donor in the catalytic mechanism.

It belongs to the PNP/UDP phosphorylase family. MtnN subfamily.

It catalyses the reaction S-adenosyl-L-homocysteine + H2O = S-(5-deoxy-D-ribos-5-yl)-L-homocysteine + adenine. It carries out the reaction S-methyl-5'-thioadenosine + H2O = 5-(methylsulfanyl)-D-ribose + adenine. The enzyme catalyses 5'-deoxyadenosine + H2O = 5-deoxy-D-ribose + adenine. The protein operates within amino-acid biosynthesis; L-methionine biosynthesis via salvage pathway; S-methyl-5-thio-alpha-D-ribose 1-phosphate from S-methyl-5'-thioadenosine (hydrolase route): step 1/2. Functionally, catalyzes the irreversible cleavage of the glycosidic bond in both 5'-methylthioadenosine (MTA) and S-adenosylhomocysteine (SAH/AdoHcy) to adenine and the corresponding thioribose, 5'-methylthioribose and S-ribosylhomocysteine, respectively. Also cleaves 5'-deoxyadenosine, a toxic by-product of radical S-adenosylmethionine (SAM) enzymes, into 5-deoxyribose and adenine. The polypeptide is 5'-methylthioadenosine/S-adenosylhomocysteine nucleosidase (Listeria monocytogenes serotype 4b (strain F2365)).